The primary structure comprises 714 residues: Transcription activator of gluconeogenesis UREG_00958 (714 aa).

A disordered region spans residues Met-1 to Arg-71. Over residues Glu-38–Asn-62 the composition is skewed to polar residues. Positions Cys-78–Cys-106 form a DNA-binding region, zn(2)-C6 fungal-type. 3 disordered regions span residues Ser-176 to Gly-228, Gly-274 to Pro-312, and Asn-539 to Ser-567. Residues Phe-191–Gly-228 are compositionally biased toward polar residues. A compositionally biased stretch (low complexity) spans Gly-545–Ser-555.

The protein belongs to the ERT1/acuK family.

Its subcellular location is the nucleus. In terms of biological role, transcription factor which regulates nonfermentable carbon utilization. Activator of gluconeogenetic genes. The sequence is that of Transcription activator of gluconeogenesis UREG_00958 from Uncinocarpus reesii (strain UAMH 1704).